A 3343-amino-acid polypeptide reads, in one-letter code: Breast cancer type 2 susceptibility protein homolog (3343 aa).

Residues 1-40 (MTVEYKRRPTFWEIFKARCSTADLGPISLNWFEELFSEAP) are interaction with PALB2. The interval 40–60 (PPYNTEHPEESEYKPQGHEPQ) is disordered. Over residues 45-56 (EHPEESEYKPQG) the composition is skewed to basic and acidic residues. Serine 70 is subject to Phosphoserine. The tract at residues 348 to 381 (IEPRDSEPLDPSVTNQKPLYSQSGDISSEAGQCS) is disordered. Polar residues predominate over residues 359-381 (SVTNQKPLYSQSGDISSEAGQCS). A phosphoserine mark is found at serine 475 and serine 736. The interval 622-982 (PDSSIKRSNL…DKWSEFLDPL (361 aa)) is interaction with NPM1. BRCA2 repeat units follow at residues 984 to 1018 (NHKLGGSFRTASNKEIKLSEDNVKKSKMFFKDIEE), 1197 to 1231 (KEMEFGGFCSALGTKLSVSNEALRKAMKLFSDIEN), 1405 to 1439 (MKEFNISFQTASGKNIRVSKESLNKSVNILDQETE), 1503 to 1537 (KEPTLLSFHTASGKKVKIMQESLDKVKNLFDETQY), 1645 to 1669 (CYTGDSRKTCVGESSLSKGKKWLRE), 1828 to 1845 (FITTHSQETVRMKEIFTD), 1939 to 1973 (PSRTYGFFSTASGKAVQVSDASLEKARQVFSEIDG), and 2019 to 2053 (SSFVFSGFSTAGGKLVTVSESALHKVKGMLEEFDL). The interaction with RAD51 stretch occupies residues 985 to 2050 (HKLGGSFRTA…LHKVKGMLEE (1066 aa)). Disordered stretches follow at residues 2059 to 2138 (TLQH…VLGT), 2297 to 2356 (PFCS…SDKS), and 2377 to 2407 (DSKNVNLEGKNQKSADGVSEDGNDSDFPQFN). Serine 2063 is modified (phosphoserine). Polar residues-rich tracts occupy residues 2083-2094 (PEYSVSSKLQKT) and 2101-2125 (SPSNYKESGSSGNTQSLEVSPQLSQ). Positions 2233–2300 (RKRGGMAGVA…EPVTCGPFCS (68 aa)) are interaction with HSF2BP. 2 stretches are compositionally biased toward polar residues: residues 2307–2320 (TQSPHVTSPAQGLQ) and 2332–2342 (GKSSSNPTVSA). Residues 2313-2475 (TSPAQGLQSK…SPKQLYMYGV (163 aa)) form an interaction with FANCD2 region. The span at 2344–2356 (RSERTRHSVSDKS) shows a compositional bias: basic and acidic residues. An interaction with SEM1 region spans residues 2411–2762 (MSSLQNARDL…QRVYPLQWVE (352 aa)). Positions 2612-2628 (AAKTLVLCVSDIISLST) match the Nuclear export signal; masked by interaction with SEM1 motif. The interval 3114 to 3163 (DSPKWSTPNKDPTREPYPASTCSASDLASGGQLPRSSPTDQQSYRSPLSC) is disordered. Positions 3147 to 3163 (PRSSPTDQQSYRSPLSC) are enriched in polar residues. Phosphoserine; by CDK1 and CDK2 is present on serine 3222. Disordered regions lie at residues 3231-3255 (PPRSCGTKYPTPLKKEGPSSPWSRA) and 3289-3343 (VGGS…PDYS). Phosphoserine is present on serine 3250. Polar residues predominate over residues 3295 to 3310 (VFPSDSTRTEGPSAST). The segment covering 3318–3334 (SKRESLRDCRDDSDGKL) has biased composition (basic and acidic residues).

In terms of assembly, monomer and dimer. Interacts with RAD51; regulates RAD51 recruitment and function at sites of DNA repair. Interacts with SEM1, WDR16, USP11, DMC1, ROCK2 and NPM1. Interacts with both nonubiquitinated and monoubiquitinated FANCD2; this complex also includes XRCC3 and phosphorylated FANCG. Part of a BRCA complex containing BRCA1, BRCA2 and PALB2. Component of the homologous recombination repair (HR) complex composed of ERCC5/XPG, BRCA2, PALB2, DSS1 and RAD51. Within the complex, interacts with ERCC5/XPG and PALB2. Interacts directly with PALB2 which may serve as a scaffold for a HR complex containing PALB2, BRCA2, RAD51C, RAD51 and XRCC3. Interacts with BRCA1 only in the presence of PALB2 which serves as the bridging protein. Interacts with POLH; the interaction is direct. Interacts with the TREX-2 complex subunits PCID2 and SEM1. Interacts with HSF2BP and BRME1; the interaction with HSF2BP is direct and allows the formation of a ternary complex. The complex BRME1:HSF2BP:BRCA2 interacts with SPATA22, MEIOB and RAD51. In terms of processing, phosphorylated by ATM upon irradiation-induced DNA damage. Phosphorylation by CHEK1 and CHEK2 regulates interaction with RAD51. Phosphorylation at Ser-3222 by CDK1 and CDK2 is low in S phase when recombination is active, but increases as cells progress towards mitosis; this phosphorylation prevents homologous recombination-dependent repair during S phase and G2 by inhibiting RAD51 binding. Ubiquitinated in the absence of DNA damage; this does not lead to proteasomal degradation. In contrast, ubiquitination in response to DNA damage leads to proteasomal degradation. In terms of tissue distribution, highest expression in testis. Also expressed in spleen, skeletal muscle, thymus, mammary gland, heart, ovary, prostate, liver, lung, kidney and brain.

The protein localises to the nucleus. It is found in the cytoplasm. Its subcellular location is the cytoskeleton. The protein resides in the microtubule organizing center. It localises to the centrosome. Its function is as follows. Involved in double-strand break repair and/or homologous recombination. Binds RAD51 and potentiates recombinational DNA repair by promoting assembly of RAD51 onto single-stranded DNA (ssDNA). Acts by targeting RAD51 to ssDNA over double-stranded DNA, enabling RAD51 to displace replication protein-A (RPA) from ssDNA and stabilizing RAD51-ssDNA filaments by blocking ATP hydrolysis. Part of a PALB2-scaffolded HR complex containing RAD51C and which is thought to play a role in DNA repair by HR. May participate in S phase checkpoint activation. Binds selectively to ssDNA, and to ssDNA in tailed duplexes and replication fork structures. May play a role in the extension step after strand invasion at replication-dependent DNA double-strand breaks; together with PALB2 is involved in both POLH localization at collapsed replication forks and DNA polymerization activity. In concert with NPM1, regulates centrosome duplication. Interacts with the TREX-2 complex (transcription and export complex 2) subunits PCID2 and SEM1, and is required to prevent R-loop-associated DNA damage and thus transcription-associated genomic instability, independently of its known role in homologous recombination. This chain is Breast cancer type 2 susceptibility protein homolog, found in Rattus norvegicus (Rat).